The chain runs to 179 residues: Probable phosphopantothenoylcysteine decarboxylase (179 aa).

Asn124 contributes to the substrate binding site. Cys157 functions as the Proton donor in the catalytic mechanism.

The protein belongs to the HFCD (homooligomeric flavin containing Cys decarboxylase) superfamily. FMN is required as a cofactor.

It catalyses the reaction N-[(R)-4-phosphopantothenoyl]-L-cysteine + H(+) = (R)-4'-phosphopantetheine + CO2. Its pathway is cofactor biosynthesis; coenzyme A biosynthesis; CoA from (R)-pantothenate: step 3/5. Catalyzes the decarboxylation of 4'-phosphopantothenoylcysteine to 4'-phosphopantetheine. The chain is Probable phosphopantothenoylcysteine decarboxylase (coaC) from Streptococcus mutans serotype c (strain ATCC 700610 / UA159).